The primary structure comprises 817 residues: DNA replication licensing factor Mcm6 (817 aa).

The C4-type zinc-finger motif lies at 152-179 (CLDCQTEIRNVEQQFKFTNPTICRNPVC). Positions 338-544 (LYQNLISSLF…VVDYAIARKI (207 aa)) constitute an MCM domain. Positions 391, 392, 393, 394, 395, and 496 each coordinate ATP. Positions 520-523 (SRFD) match the Arginine finger motif. 2 residues coordinate ADP: Arg-611 and Glu-614.

This sequence belongs to the MCM family. As to quaternary structure, component of the Mcm2-7 complex. The complex forms a toroidal hexameric ring with the proposed subunit order Mcm2-Mcm6-Mcm4-Mcm7-Mcm3-Mcm5. The heterodimers of Mcm4/Mcm6 and Mcm3/Mcm5 interact with Mcm2 and Mcm7. In terms of tissue distribution, in stage 12 embryos, strongly expressed in the CNS and weakly in the gut.

It is found in the nucleus. The catalysed reaction is ATP + H2O = ADP + phosphate + H(+). Functionally, acts as a component of the Mcm2-7 complex (Mcm complex) which is the putative replicative helicase essential for 'once per cell cycle' DNA replication initiation and elongation in eukaryotic cells. Core component of CDC45-MCM-GINS (CMG) helicase, the molecular machine that unwinds template DNA during replication, and around which the replisome is built. The active ATPase sites in the Mcm2-7 ring are formed through the interaction surfaces of two neighboring subunits such that a critical structure of a conserved arginine finger motif is provided in trans relative to the ATP-binding site of the Walker A box of the adjacent subunit. The six ATPase active sites, however, are likely to contribute differentially to the complex helicase activity Required for DNA replication and cell proliferation. Required for mitotic cycles, endocycles, and the special S phase associated with the amplification of chorion genes; has a role in origin unwinding or fork elongation at chorion loci. The polypeptide is DNA replication licensing factor Mcm6 (Drosophila melanogaster (Fruit fly)).